Reading from the N-terminus, the 591-residue chain is V-type ATP synthase alpha chain (591 aa).

242 to 249 contributes to the ATP binding site; sequence GPFGAGKT.

Belongs to the ATPase alpha/beta chains family.

The enzyme catalyses ATP + H2O + 4 H(+)(in) = ADP + phosphate + 5 H(+)(out). In terms of biological role, produces ATP from ADP in the presence of a proton gradient across the membrane. The V-type alpha chain is a catalytic subunit. The chain is V-type ATP synthase alpha chain from Chlamydia trachomatis serovar L2 (strain ATCC VR-902B / DSM 19102 / 434/Bu).